The sequence spans 216 residues: Octanoyltransferase (216 aa).

The region spanning 35 to 213 (NSNPDFIWIG…IIQEEFNFDF (179 aa)) is the BPL/LPL catalytic domain. Residues 77 to 84 (RGGEVTCH), 144 to 146 (SIG), and 157 to 159 (GFS) each bind substrate. C175 functions as the Acyl-thioester intermediate in the catalytic mechanism.

The protein belongs to the LipB family.

Its subcellular location is the cytoplasm. It carries out the reaction octanoyl-[ACP] + L-lysyl-[protein] = N(6)-octanoyl-L-lysyl-[protein] + holo-[ACP] + H(+). Its pathway is protein modification; protein lipoylation via endogenous pathway; protein N(6)-(lipoyl)lysine from octanoyl-[acyl-carrier-protein]: step 1/2. Its function is as follows. Catalyzes the transfer of endogenously produced octanoic acid from octanoyl-acyl-carrier-protein onto the lipoyl domains of lipoate-dependent enzymes. Lipoyl-ACP can also act as a substrate although octanoyl-ACP is likely to be the physiological substrate. The protein is Octanoyltransferase of Prochlorococcus marinus (strain MIT 9312).